Consider the following 1396-residue polypeptide: ABC-type transporter cicA (1396 aa).

Positions 1–40 (MRLSSEAKIAESGGQPPTAGSRSETGSESTEAESADPKAQ) are disordered. Residues 18-29 (TAGSRSETGSES) are compositionally biased toward low complexity. A run of 3 helical transmembrane segments spans residues 142-162 (FLLG…APYL), 191-211 (GFVV…NQFL), and 300-320 (MFHI…LLLV). The 324-residue stretch at 143 to 466 (LLGGFCHLIS…LPLVLGQITD (324 aa)) folds into the ABC transmembrane type-1 1 domain. The N-linked (GlcNAc...) asparagine glycan is linked to Asn-321. A run of 3 helical transmembrane segments spans residues 324–344 (YSAL…TYAV), 409–429 (ILCV…ITYA), and 440–460 (IFSS…LPLV). Residues 510 to 533 (AADKEAEKVEKKANPRRTEPKSEA) are compositionally biased toward basic and acidic residues. A disordered region spans residues 510–543 (AADKEAEKVEKKANPRRTEPKSEAPTDSAESDEP). The 227-residue stretch at 525 to 751 (RRTEPKSEAP…NDLFKQLMST (227 aa)) folds into the ABC transporter 1 domain. 563-570 (GTVGSGKS) provides a ligand contact to ATP. The N-linked (GlcNAc...) asparagine glycan is linked to Asn-604. The tract at residues 751 to 787 (TASQDSKEDEEEATEVVEEEAEKQAQQEPTKPAAALM) is disordered. The segment covering 757–771 (KEDEEEATEVVEEEA) has biased composition (acidic residues). Transmembrane regions (helical) follow at residues 816–836 (LAIL…NLWL) and 852–872 (YIGI…IFST). In terms of domain architecture, ABC transmembrane type-1 2 spans 816–1093 (LAILFLLAFA…TVRQLAEVEN (278 aa)). A glycan (N-linked (GlcNAc...) asparagine) is linked at Asn-880. The next 4 membrane-spanning stretches (helical) occupy residues 930–947 (MYAI…LIIV), 951–970 (YFAI…SNYY), 1036–1056 (LSVR…VLVV), and 1065–1085 (SISG…QFTV). Residues Asn-1096, Asn-1150, and Asn-1154 are each glycosylated (N-linked (GlcNAc...) asparagine). The ABC transporter 2 domain maps to 1131–1380 (ITFDNVAMRY…EDGIFRAMCE (250 aa)). 1165–1172 (GRTGAGKS) serves as a coordination point for ATP.

Belongs to the ABC transporter superfamily. ABCC family. Conjugate transporter (TC 3.A.1.208) subfamily.

The protein localises to the cell membrane. Functionally, ABC-type transporter; part of the gene cluster that mediates the biosynthesis of cichorine, a phytotoxin active against knapweed, corn, and soybeans. CicA is probably involved in the secretion of cichorine. The polypeptide is ABC-type transporter cicA (Emericella nidulans (strain FGSC A4 / ATCC 38163 / CBS 112.46 / NRRL 194 / M139) (Aspergillus nidulans)).